The sequence spans 395 residues: Multidrug resistance protein MdtL (395 aa).

The Cytoplasmic segment spans residues 1–3 (MKR). The chain crosses the membrane as a helical span at residues 4-24 (FLLCSFALVLLYPAGIDMYLV). Topologically, residues 25–41 (GLPRIAADLNASEAQLH) are periplasmic. A helical membrane pass occupies residues 42 to 62 (IAFSVYLAGMATAMLFAGKIA). The Cytoplasmic portion of the chain corresponds to 63 to 68 (DQSGRK). Residues 69 to 89 (PVAIVGALVFMMASLLCSRAS) form a helical membrane-spanning segment. The Periplasmic segment spans residues 90 to 92 (EGS). Residues 93 to 113 (LFLSGRFLQGVGAGGCYVVAF) form a helical membrane-spanning segment. Topologically, residues 114–130 (AILRDTLDEHRRAKVLS) are cytoplasmic. A helical transmembrane segment spans residues 131 to 151 (LLNGITCIVPVLAPVVGHLIM). At 152 to 157 (LRFPWQ) the chain is on the periplasmic side. Residues 158 to 178 (SLFYTMSAMGIIVGLLSLFIL) form a helical membrane-spanning segment. The Cytoplasmic portion of the chain corresponds to 179-216 (RETRPVRLAPRDLSRSSPAAESLINRFFVSRLAITTLS). Residues 217 to 237 (VSVILTFVNASPVLLMEVMGF) traverse the membrane as a helical segment. Over 238–246 (SRGDYAITM) the chain is Periplasmic. Residues 247–267 (ALTAGVSMVVSFSTPFALGLF) traverse the membrane as a helical segment. Topologically, residues 268-270 (KPR) are cytoplasmic. Residues 271 to 291 (TLMLVSQGLFLTAGVTLSLAH) traverse the membrane as a helical segment. Topologically, residues 292–294 (TNT) are periplasmic. A helical transmembrane segment spans residues 295–315 (VTLFGLTLICAGFSVGFGVAM). At 316-327 (SQALGPFSLRAG) the chain is on the cytoplasmic side. Residues 328–350 (VASSTLGIAQVCGSSLWIWLAAI) traverse the membrane as a helical segment. The Periplasmic portion of the chain corresponds to 351–354 (LGIS). A helical transmembrane segment spans residues 355 to 377 (AMNMLIGILIGCSIVSILLIFSV). Over 378–395 (TPNRSVAEHEEIPYQSRP) the chain is Cytoplasmic.

It belongs to the major facilitator superfamily. DHA1 family. MdtL (TC 2.A.1.2.22) subfamily.

It is found in the cell inner membrane. The protein is Multidrug resistance protein MdtL (mdtL) of Salmonella typhimurium (strain LT2 / SGSC1412 / ATCC 700720).